Reading from the N-terminus, the 258-residue chain is Phosphatidylglycerol--prolipoprotein diacylglyceryl transferase (258 aa).

7 helical membrane passes run 9 to 29, 53 to 73, 90 to 110, 117 to 139, 169 to 189, 198 to 218, and 230 to 250; these read ILIQ…ATGF, LLTY…TLIY, EGGL…WLFV, KFLW…IRLG, PVQL…LMLF, GFLF…IEYF, and LISV…VLML. Arg-137 serves as a coordination point for a 1,2-diacyl-sn-glycero-3-phospho-(1'-sn-glycerol).

Belongs to the Lgt family.

The protein resides in the cell inner membrane. The catalysed reaction is L-cysteinyl-[prolipoprotein] + a 1,2-diacyl-sn-glycero-3-phospho-(1'-sn-glycerol) = an S-1,2-diacyl-sn-glyceryl-L-cysteinyl-[prolipoprotein] + sn-glycerol 1-phosphate + H(+). The protein operates within protein modification; lipoprotein biosynthesis (diacylglyceryl transfer). Its function is as follows. Catalyzes the transfer of the diacylglyceryl group from phosphatidylglycerol to the sulfhydryl group of the N-terminal cysteine of a prolipoprotein, the first step in the formation of mature lipoproteins. This chain is Phosphatidylglycerol--prolipoprotein diacylglyceryl transferase, found in Tolumonas auensis (strain DSM 9187 / NBRC 110442 / TA 4).